The chain runs to 236 residues: Transcription repressor MYB6 (236 aa).

2 HTH myb-type domains span residues 9–61 (KAHT…INYL) and 62–116 (RPDL…KRKL). 2 consecutive DNA-binding regions (H-T-H motif) follow at residues 37–61 (WRSLPKSAGLLRCGKSCRLRWINYL) and 89–112 (WSLIAGRLPGRTDNEIKNYWNTHI). The tract at residues 159–181 (PKTENSSDNGASTSGTTTDEDLR) is disordered. A compositionally biased stretch (polar residues) spans 162 to 175 (ENSSDNGASTSGTT).

As to quaternary structure, interacts with BHLH012/MYC1 and BHLH042/TT8. In terms of tissue distribution, expressed in roots, stems, flower buds, and siliques.

Its subcellular location is the nucleus. The protein is Transcription repressor MYB6 (MYB6) of Arabidopsis thaliana (Mouse-ear cress).